The following is a 386-amino-acid chain: Pepsin A (386 aa).

A signal peptide spans 1–15; that stretch reads MKWLLLLSLVALSEC. The propeptide at 16-60 is activation peptide; that stretch reads YIYKVPLVKKKSLRKNLMEQGLLQDYLKTHSINPASKYLKEAASM. The region spanning 74-383 is the Peptidase A1 domain; the sequence is YFGTIGIGTP…DRGNNQVGLA (310 aa). Asp92 is an active-site residue. Intrachain disulfides connect Cys105–Cys110 and Cys266–Cys270. The active site involves Asp275. A disulfide bridge links Cys309 with Cys342.

It belongs to the peptidase A1 family.

It is found in the secreted. The enzyme catalyses Preferential cleavage: hydrophobic, preferably aromatic, residues in P1 and P1' positions. Cleaves 1-Phe-|-Val-2, 4-Gln-|-His-5, 13-Glu-|-Ala-14, 14-Ala-|-Leu-15, 15-Leu-|-Tyr-16, 16-Tyr-|-Leu-17, 23-Gly-|-Phe-24, 24-Phe-|-Phe-25 and 25-Phe-|-Tyr-26 bonds in the B chain of insulin.. Functionally, shows particularly broad specificity; although bonds involving phenylalanine and leucine are preferred, many others are also cleaved to some extent. The polypeptide is Pepsin A (PGA) (Rhinolophus ferrumequinum (Greater horseshoe bat)).